The primary structure comprises 270 residues: 26S proteasome regulatory subunit rpn12 (270 aa).

One can recognise a PCI domain in the interval cysteine 65–aspartate 237.

It belongs to the proteasome subunit S14 family.

In terms of biological role, acts as a regulatory subunit of the 26S proteasome which is involved in the ATP-dependent degradation of ubiquitinated proteins. This is 26S proteasome regulatory subunit rpn12 (rpn12) from Schizosaccharomyces pombe (strain 972 / ATCC 24843) (Fission yeast).